Reading from the N-terminus, the 505-residue chain is Maturase K (505 aa).

The protein belongs to the intron maturase 2 family. MatK subfamily.

It is found in the plastid. The protein resides in the chloroplast. Its function is as follows. Usually encoded in the trnK tRNA gene intron. Probably assists in splicing its own and other chloroplast group II introns. In Cubanola domingensis, this protein is Maturase K.